We begin with the raw amino-acid sequence, 165 residues long: Large ribosomal subunit protein uL10 (165 aa).

N6-acetyllysine occurs at positions 37 and 105.

The protein belongs to the universal ribosomal protein uL10 family. As to quaternary structure, part of the ribosomal stalk of the 50S ribosomal subunit. The N-terminus interacts with L11 and the large rRNA to form the base of the stalk. The C-terminus forms an elongated spine to which L12 dimers bind in a sequential fashion forming a multimeric L10(L12)X complex.

Functionally, protein L10 is also a translational repressor protein. It controls the translation of the rplJL-rpoBC operon by binding to its mRNA. In terms of biological role, forms part of the ribosomal stalk, playing a central role in the interaction of the ribosome with GTP-bound translation factors. This chain is Large ribosomal subunit protein uL10 (rplJ), found in Escherichia coli O6:H1 (strain CFT073 / ATCC 700928 / UPEC).